A 700-amino-acid polypeptide reads, in one-letter code: Peroxisomal acyl-coenzyme A oxidase 3 (700 aa).

Residue alanine 2 is modified to N-acetylalanine. A Phosphothreonine modification is found at threonine 281. Positions 698–700 (SKL) match the Microbody targeting signal motif.

This sequence belongs to the acyl-CoA oxidase family. FAD serves as cofactor.

It localises to the peroxisome. It catalyses the reaction a 2,3-saturated acyl-CoA + O2 = a (2E)-enoyl-CoA + H2O2. The enzyme catalyses (2S)-pristanoyl-CoA + O2 = (2E)-pristenoyl-CoA + H2O2. It carries out the reaction tetracosanoyl-CoA + O2 = (2E)-tetracosenoyl-CoA + H2O2. The catalysed reaction is hexadecanoyl-CoA + O2 = (2E)-hexadecenoyl-CoA + H2O2. It catalyses the reaction hexadecanedioyl-CoA + O2 = (2E)-hexadecenedioyl-CoA + H2O2. It participates in lipid metabolism; peroxisomal fatty acid beta-oxidation. In terms of biological role, oxidizes the CoA-esters of 2-methyl-branched fatty acids. In Homo sapiens (Human), this protein is Peroxisomal acyl-coenzyme A oxidase 3 (ACOX3).